A 353-amino-acid polypeptide reads, in one-letter code: MRDEQATGAAITFDRVEKSFAQKGGAPVMALSDCTLTVEPGAITGIIGRSGAGKSTLLRMVNGLERPTGGRVLVGGRDVGAADGAELREIRREVGMIFQHFNLLASRTVFGNVALPLEIAGRPSSEIRTRVADLIARVGLEALADRYPAELSGGQKQRVGIARALATGPKVLLSDEATSALDPETTQTVLRLLADINRDLGLTILLITHEMGVVRDIATHMAVIDGGRIVEAGPTYDIFVRPEHPTTRSFLSGVTGVTLPAFVASRLRPAPPEGPSQEVIRITFAGRHATDPMLARLTGELGIAVNILAGAIEEIGPHPFGNLLVSVETPRGAEARAYLERHQLLTEVLGYVG.

In terms of domain architecture, ABC transporter spans 11 to 251; the sequence is ITFDRVEKSF…PEHPTTRSFL (241 aa). ATP is bound at residue 48-55; it reads GRSGAGKS.

The protein belongs to the ABC transporter superfamily. Methionine importer (TC 3.A.1.24) family. In terms of assembly, the complex is composed of two ATP-binding proteins (MetN), two transmembrane proteins (MetI) and a solute-binding protein (MetQ).

It is found in the cell inner membrane. It carries out the reaction L-methionine(out) + ATP + H2O = L-methionine(in) + ADP + phosphate + H(+). The enzyme catalyses D-methionine(out) + ATP + H2O = D-methionine(in) + ADP + phosphate + H(+). Its function is as follows. Part of the ABC transporter complex MetNIQ involved in methionine import. Responsible for energy coupling to the transport system. The sequence is that of Methionine import ATP-binding protein MetN from Cereibacter sphaeroides (strain ATCC 17023 / DSM 158 / JCM 6121 / CCUG 31486 / LMG 2827 / NBRC 12203 / NCIMB 8253 / ATH 2.4.1.) (Rhodobacter sphaeroides).